Here is a 357-residue protein sequence, read N- to C-terminus: Protein RecA (357 aa).

67–74 (GPESSGKT) lines the ATP pocket.

Belongs to the RecA family.

It localises to the cytoplasm. Can catalyze the hydrolysis of ATP in the presence of single-stranded DNA, the ATP-dependent uptake of single-stranded DNA by duplex DNA, and the ATP-dependent hybridization of homologous single-stranded DNAs. It interacts with LexA causing its activation and leading to its autocatalytic cleavage. In Shewanella oneidensis (strain ATCC 700550 / JCM 31522 / CIP 106686 / LMG 19005 / NCIMB 14063 / MR-1), this protein is Protein RecA.